A 264-amino-acid polypeptide reads, in one-letter code: Undecaprenyl-diphosphatase (264 aa).

Helical transmembrane passes span 1–21, 39–59, 87–107, 111–131, 144–164, 187–207, 208–228, and 244–264; these read MDLIHVVVLALIQGITEFLPI, QGLAFDVAVHVGTLTAVAVYF, WYLIAATIPAALFGLIFDDLI, LRSTDVIATTTLVFGVLLWVA, IALSTAMIIGLAQAVALIPGT, FSFLLSIPVIVLSGGYKGLQL, VLSAAAVDWLAIGLGIALSAV, and IGMLPFVIYRLLLGVLLFIAV.

It belongs to the UppP family.

The protein resides in the cell inner membrane. It catalyses the reaction di-trans,octa-cis-undecaprenyl diphosphate + H2O = di-trans,octa-cis-undecaprenyl phosphate + phosphate + H(+). Catalyzes the dephosphorylation of undecaprenyl diphosphate (UPP). Confers resistance to bacitracin. The chain is Undecaprenyl-diphosphatase from Teredinibacter turnerae (strain ATCC 39867 / T7901).